An 852-amino-acid polypeptide reads, in one-letter code: Bifunctional uridylyltransferase/uridylyl-removing enzyme (852 aa).

Residues 1 to 318 are uridylyltransferase; the sequence is MPENLSSALE…STPVRVTLRI (318 aa). The tract at residues 319–672 is uridylyl-removing; sequence DDDYIQVNNQ…SRILPQSDSF (354 aa). The HD domain maps to 436–558; sequence VDDHILAVVR…VQTHERLSAL (123 aa). ACT domains follow at residues 673–757 and 785–852; these read QVMV…SCNR and SVEI…EQLA.

The protein belongs to the GlnD family. The cofactor is Mg(2+).

The enzyme catalyses [protein-PII]-L-tyrosine + UTP = [protein-PII]-uridylyl-L-tyrosine + diphosphate. The catalysed reaction is [protein-PII]-uridylyl-L-tyrosine + H2O = [protein-PII]-L-tyrosine + UMP + H(+). With respect to regulation, uridylyltransferase (UTase) activity is inhibited by glutamine, while glutamine activates uridylyl-removing (UR) activity. Functionally, modifies, by uridylylation and deuridylylation, the PII regulatory proteins (GlnB and homologs), in response to the nitrogen status of the cell that GlnD senses through the glutamine level. Under low glutamine levels, catalyzes the conversion of the PII proteins and UTP to PII-UMP and PPi, while under higher glutamine levels, GlnD hydrolyzes PII-UMP to PII and UMP (deuridylylation). Thus, controls uridylylation state and activity of the PII proteins, and plays an important role in the regulation of nitrogen assimilation and metabolism. This Neisseria gonorrhoeae (strain ATCC 700825 / FA 1090) protein is Bifunctional uridylyltransferase/uridylyl-removing enzyme.